A 362-amino-acid polypeptide reads, in one-letter code: Porin Omp2b (362 aa).

Residues 1-22 (MNIKSLLLGSAAALVAASGAQA) form the signal peptide.

It belongs to the alphaproteobacteria porin family. Homotrimer.

The protein localises to the cell outer membrane. Its function is as follows. Forms passive diffusion pores that allow small molecular weight hydrophilic materials across the outer membrane. The protein is Porin Omp2b (omp2b) of Brucella melitensis biotype 1 (strain ATCC 23456 / CCUG 17765 / NCTC 10094 / 16M).